A 230-amino-acid polypeptide reads, in one-letter code: Heptaprenylglyceryl phosphate synthase (230 aa).

Sn-glycerol 1-phosphate is bound at residue lysine 12. Mg(2+)-binding residues include aspartate 14 and threonine 40. Sn-glycerol 1-phosphate-binding positions include 159–164, glycine 189, and 209–210; these read YIEYSG and GD.

The protein belongs to the GGGP/HepGP synthase family. Group I subfamily. As to quaternary structure, homodimer. Mg(2+) is required as a cofactor.

It catalyses the reaction sn-glycerol 1-phosphate + all-trans-heptaprenyl diphosphate = 3-heptaprenyl-sn-glycero-1-phosphate + diphosphate. It functions in the pathway membrane lipid metabolism; glycerophospholipid metabolism. Functionally, prenyltransferase that catalyzes in vivo the transfer of the heptaprenyl moiety of heptaprenyl pyrophosphate (HepPP; 35 carbon atoms) to the C3 hydroxyl of sn-glycerol-1-phosphate (G1P), producing heptaprenylglyceryl phosphate (HepGP). This reaction is an ether-bond-formation step in the biosynthesis of archaea-type G1P-based membrane lipids found in Bacillales. The protein is Heptaprenylglyceryl phosphate synthase of Staphylococcus aureus (strain MRSA252).